Reading from the N-terminus, the 551-residue chain is mRNA cap guanine-N(7) methyltransferase (551 aa).

Residues 1–10 are compositionally biased toward polar residues; that stretch reads MENRSSSGTP. The tract at residues 1 to 152 is disordered; it reads MENRSSSGTP…DRETLRRRQE (152 aa). Basic and acidic residues-rich tracts occupy residues 48–76 and 141–152; these read VTEEGEASEKSEPPADRPMSKRKRMEERH and LVDRETLRRRQE. The region spanning 194–551 is the mRNA cap 0 methyltransferase domain; the sequence is SKIKGLRSFN…FYHAFCFYKV (358 aa). MRNA is bound at residue 203–204; the sequence is NN. S-adenosyl-L-methionine is bound by residues Lys-207, Gly-250, Asp-274, Asp-312, 355-357, and Tyr-360; that span reads MFA. A disordered region spans residues 407 to 430; that stretch reads KAREEQEKKEKSDEAPEDGEVEED. A compositionally biased stretch (basic and acidic residues) spans 408-420; the sequence is AREEQEKKEKSDE. Positions 421 to 430 are enriched in acidic residues; sequence APEDGEVEED.

The protein belongs to the class I-like SAM-binding methyltransferase superfamily. mRNA cap 0 methyltransferase family.

The protein resides in the nucleus. The enzyme catalyses a 5'-end (5'-triphosphoguanosine)-ribonucleoside in mRNA + S-adenosyl-L-methionine = a 5'-end (N(7)-methyl 5'-triphosphoguanosine)-ribonucleoside in mRNA + S-adenosyl-L-homocysteine. In terms of biological role, responsible for methylating the 5'-cap structure of mRNAs. In Aspergillus clavatus (strain ATCC 1007 / CBS 513.65 / DSM 816 / NCTC 3887 / NRRL 1 / QM 1276 / 107), this protein is mRNA cap guanine-N(7) methyltransferase (abd1).